A 215-amino-acid chain; its full sequence is Cytochrome c biogenesis ATP-binding export protein CcmA (215 aa).

One can recognise an ABC transporter domain in the interval 8-215 (LQATALACER…RDLDLGQWSA (208 aa)). 40 to 47 (GPNGCGKT) contributes to the ATP binding site.

The protein belongs to the ABC transporter superfamily. CcmA exporter (TC 3.A.1.107) family. The complex is composed of two ATP-binding proteins (CcmA) and two transmembrane proteins (CcmB).

Its subcellular location is the cell inner membrane. It carries out the reaction heme b(in) + ATP + H2O = heme b(out) + ADP + phosphate + H(+). In terms of biological role, part of the ABC transporter complex CcmAB involved in the biogenesis of c-type cytochromes; once thought to export heme, this seems not to be the case, but its exact role is uncertain. Responsible for energy coupling to the transport system. The chain is Cytochrome c biogenesis ATP-binding export protein CcmA from Pseudomonas syringae pv. syringae (strain B728a).